Consider the following 392-residue polypeptide: Leucine-rich repeat-containing protein 74B (392 aa).

The segment at 24 to 46 is disordered; sequence RLSGVPEAEQGPEANWDSDLETE. 9 LRR repeats span residues 106-129, 134-157, 162-185, 192-213, 220-241, 248-269, 276-297, 304-325, and 334-356; these read NPYV…ALAG, SSSI…ALCA, NQAM…HLAE, DLKS…TLGP, GLTE…AFAR, FLKV…AVGE, VLEE…SLGL, TLRI…GLLK, and ALEL…ASSV.

The sequence is that of Leucine-rich repeat-containing protein 74B from Homo sapiens (Human).